Here is a 343-residue protein sequence, read N- to C-terminus: Holliday junction branch migration complex subunit RuvB (343 aa).

Residues 4-193 (TDNLTAAQPQ…FGIVSRLEFY (190 aa)) are large ATPase domain (RuvB-L). ATP-binding positions include L32, R33, G74, K77, T78, T79, 140–142 (EDY), R183, Y193, and R230. Residue T78 coordinates Mg(2+). The interval 194–264 (ENRDLATIVS…IADAALSMLD (71 aa)) is small ATPAse domain (RuvB-S). The tract at residues 267–343 (VQGLDVMDRK…YLHFGLPVEK (77 aa)) is head domain (RuvB-H). Residues R322 and R327 each coordinate DNA.

Belongs to the RuvB family. In terms of assembly, homohexamer. Forms an RuvA(8)-RuvB(12)-Holliday junction (HJ) complex. HJ DNA is sandwiched between 2 RuvA tetramers; dsDNA enters through RuvA and exits via RuvB. An RuvB hexamer assembles on each DNA strand where it exits the tetramer. Each RuvB hexamer is contacted by two RuvA subunits (via domain III) on 2 adjacent RuvB subunits; this complex drives branch migration. In the full resolvosome a probable DNA-RuvA(4)-RuvB(12)-RuvC(2) complex forms which resolves the HJ.

It localises to the cytoplasm. The catalysed reaction is ATP + H2O = ADP + phosphate + H(+). In terms of biological role, the RuvA-RuvB-RuvC complex processes Holliday junction (HJ) DNA during genetic recombination and DNA repair, while the RuvA-RuvB complex plays an important role in the rescue of blocked DNA replication forks via replication fork reversal (RFR). RuvA specifically binds to HJ cruciform DNA, conferring on it an open structure. The RuvB hexamer acts as an ATP-dependent pump, pulling dsDNA into and through the RuvAB complex. RuvB forms 2 homohexamers on either side of HJ DNA bound by 1 or 2 RuvA tetramers; 4 subunits per hexamer contact DNA at a time. Coordinated motions by a converter formed by DNA-disengaged RuvB subunits stimulates ATP hydrolysis and nucleotide exchange. Immobilization of the converter enables RuvB to convert the ATP-contained energy into a lever motion, pulling 2 nucleotides of DNA out of the RuvA tetramer per ATP hydrolyzed, thus driving DNA branch migration. The RuvB motors rotate together with the DNA substrate, which together with the progressing nucleotide cycle form the mechanistic basis for DNA recombination by continuous HJ branch migration. Branch migration allows RuvC to scan DNA until it finds its consensus sequence, where it cleaves and resolves cruciform DNA. The sequence is that of Holliday junction branch migration complex subunit RuvB from Neisseria meningitidis serogroup A / serotype 4A (strain DSM 15465 / Z2491).